A 369-amino-acid polypeptide reads, in one-letter code: UDP-N-acetylglucosamine--N-acetylmuramyl-(pentapeptide) pyrophosphoryl-undecaprenol N-acetylglucosamine transferase (369 aa).

Residues 15–17 (TGG), Asn-126, Arg-169, Ser-197, and Gln-299 contribute to the UDP-N-acetyl-alpha-D-glucosamine site.

It belongs to the glycosyltransferase 28 family. MurG subfamily.

It localises to the cell inner membrane. The catalysed reaction is di-trans,octa-cis-undecaprenyl diphospho-N-acetyl-alpha-D-muramoyl-L-alanyl-D-glutamyl-meso-2,6-diaminopimeloyl-D-alanyl-D-alanine + UDP-N-acetyl-alpha-D-glucosamine = di-trans,octa-cis-undecaprenyl diphospho-[N-acetyl-alpha-D-glucosaminyl-(1-&gt;4)]-N-acetyl-alpha-D-muramoyl-L-alanyl-D-glutamyl-meso-2,6-diaminopimeloyl-D-alanyl-D-alanine + UDP + H(+). It functions in the pathway cell wall biogenesis; peptidoglycan biosynthesis. In terms of biological role, cell wall formation. Catalyzes the transfer of a GlcNAc subunit on undecaprenyl-pyrophosphoryl-MurNAc-pentapeptide (lipid intermediate I) to form undecaprenyl-pyrophosphoryl-MurNAc-(pentapeptide)GlcNAc (lipid intermediate II). The protein is UDP-N-acetylglucosamine--N-acetylmuramyl-(pentapeptide) pyrophosphoryl-undecaprenol N-acetylglucosamine transferase of Methylorubrum extorquens (strain PA1) (Methylobacterium extorquens).